A 449-amino-acid polypeptide reads, in one-letter code: Heterogeneous nuclear ribonucleoprotein H (449 aa).

N-acetylmethionine is present on Met-1. At Met-2 the chain carries N-acetylmethionine; in Heterogeneous nuclear ribonucleoprotein H, N-terminally processed. The region spanning 11-90 (FVVKVRGLPW…RYVEVFKSNN (80 aa)) is the RRM 1 domain. Residue Ser-23 is modified to Phosphoserine. Lys-35 participates in a covalent cross-link: Glycyl lysine isopeptide (Lys-Gly) (interchain with G-Cter in SUMO2). 2 positions are modified to phosphoserine: Ser-54 and Ser-63. Residues Lys-87 and Lys-98 each participate in a glycyl lysine isopeptide (Lys-Gly) (interchain with G-Cter in SUMO2) cross-link. The RRM 2 domain occupies 111-188 (GFVRLRGLPF…RYIEIFKSSR (78 aa)). A Dimethylated arginine; alternate modification is found at Arg-233. Arg-233 carries the omega-N-methylarginine; alternate modification. A 1-1 repeat occupies 234-249 (GAYGGGYGGYDDYNGY). Residues 234–433 (GAYGGGYGGY…YGGQSSMSGY (200 aa)) form a 2 X 16 AA Gly-rich approximate repeats region. Phosphotyrosine is present on Tyr-246. The RRM 3 domain occupies 289–364 (HCVHMRGLPY…RYVELFLNST (76 aa)). The residue at position 310 (Ser-310) is a Phosphoserine. 3 repeat units span residues 354–372 (HRYVELFLNSTAGASGGAY), 374–392 (HRYVELFLNSTAGASGGAY), and 418–433 (GGYGGGYGGQSSMSGY). Residues 354 to 392 (HRYVELFLNSTAGASGGAYEHRYVELFLNSTAGASGGAY) form a 2 X 19 AA perfect repeats region.

In terms of assembly, part of a ternary complex containing FUBP2, PTBP1, PTBP2 and HNRNPH1. Identified in the spliceosome C complex. Interacts with IGF2BP1. Interacts with CUGBP1; the interaction is RNA-dependent. Interacts with MBNL1; the interaction in RNA-independent.

The protein localises to the nucleus. Its subcellular location is the nucleoplasm. Functionally, this protein is a component of the heterogeneous nuclear ribonucleoprotein (hnRNP) complexes which provide the substrate for the processing events that pre-mRNAs undergo before becoming functional, translatable mRNAs in the cytoplasm. Mediates pre-mRNA alternative splicing regulation. Inhibits, together with CUGBP1, insulin receptor (IR) pre-mRNA exon 11 inclusion in myoblast. Binds to the IR RNA. Binds poly(RG). This Rattus norvegicus (Rat) protein is Heterogeneous nuclear ribonucleoprotein H (Hnrnph1).